A 93-amino-acid chain; its full sequence is Large ribosomal subunit protein uL23cz/uL23cy (93 aa).

The protein belongs to the universal ribosomal protein uL23 family. Part of the 50S ribosomal subunit.

Its subcellular location is the plastid. The protein localises to the chloroplast. In terms of biological role, binds to 23S rRNA. This Platanus occidentalis (Sycamore) protein is Large ribosomal subunit protein uL23cz/uL23cy (rpl23-A).